The primary structure comprises 733 residues: Phosphoribosylformylglycinamidine synthase subunit PurL (733 aa).

H42 is an active-site residue. Residues Y45 and K84 each coordinate ATP. Position 86 (E86) interacts with Mg(2+). Residues 87–90 (SHNH) and R109 each bind substrate. The active-site Proton acceptor is H88. Residue D110 participates in Mg(2+) binding. Residue Q233 coordinates substrate. D261 provides a ligand contact to Mg(2+). Substrate is bound at residue 305 to 307 (ESQ). Residues D489 and G526 each contribute to the ATP site. Position 527 (N527) interacts with Mg(2+). S529 is a substrate binding site.

It belongs to the FGAMS family. As to quaternary structure, monomer. Part of the FGAM synthase complex composed of 1 PurL, 1 PurQ and 2 PurS subunits.

The protein resides in the cytoplasm. It catalyses the reaction N(2)-formyl-N(1)-(5-phospho-beta-D-ribosyl)glycinamide + L-glutamine + ATP + H2O = 2-formamido-N(1)-(5-O-phospho-beta-D-ribosyl)acetamidine + L-glutamate + ADP + phosphate + H(+). It functions in the pathway purine metabolism; IMP biosynthesis via de novo pathway; 5-amino-1-(5-phospho-D-ribosyl)imidazole from N(2)-formyl-N(1)-(5-phospho-D-ribosyl)glycinamide: step 1/2. Its function is as follows. Part of the phosphoribosylformylglycinamidine synthase complex involved in the purines biosynthetic pathway. Catalyzes the ATP-dependent conversion of formylglycinamide ribonucleotide (FGAR) and glutamine to yield formylglycinamidine ribonucleotide (FGAM) and glutamate. The FGAM synthase complex is composed of three subunits. PurQ produces an ammonia molecule by converting glutamine to glutamate. PurL transfers the ammonia molecule to FGAR to form FGAM in an ATP-dependent manner. PurS interacts with PurQ and PurL and is thought to assist in the transfer of the ammonia molecule from PurQ to PurL. This chain is Phosphoribosylformylglycinamidine synthase subunit PurL, found in Moorella thermoacetica (strain ATCC 39073 / JCM 9320).